Here is a 451-residue protein sequence, read N- to C-terminus: 3-phosphoshikimate 1-carboxyvinyltransferase (451 aa).

Lys30, Ser31, and Arg35 together coordinate 3-phosphoshikimate. Lys30 is a phosphoenolpyruvate binding site. 2 residues coordinate phosphoenolpyruvate: Gly101 and Arg130. The 3-phosphoshikimate site is built by Ser176, Ser177, Gln178, Asp321, and Lys348. Gln178 contributes to the phosphoenolpyruvate binding site. Catalysis depends on Asp321, which acts as the Proton acceptor. Positions 352 and 422 each coordinate phosphoenolpyruvate.

This sequence belongs to the EPSP synthase family. Monomer.

Its subcellular location is the cytoplasm. It carries out the reaction 3-phosphoshikimate + phosphoenolpyruvate = 5-O-(1-carboxyvinyl)-3-phosphoshikimate + phosphate. It participates in metabolic intermediate biosynthesis; chorismate biosynthesis; chorismate from D-erythrose 4-phosphate and phosphoenolpyruvate: step 6/7. Functionally, catalyzes the transfer of the enolpyruvyl moiety of phosphoenolpyruvate (PEP) to the 5-hydroxyl of shikimate-3-phosphate (S3P) to produce enolpyruvyl shikimate-3-phosphate and inorganic phosphate. The protein is 3-phosphoshikimate 1-carboxyvinyltransferase of Burkholderia pseudomallei (strain K96243).